The following is a 424-amino-acid chain: Type II methyltransferase M.XorII (424 aa).

Residues 4–367 enclose the SAM-dependent MTase C5-type domain; it reads PIGIDLFAGA…GQIMKALRKK (364 aa). Cysteine 83 is a catalytic residue. The disordered stretch occupies residues 404–424; it reads RSRPVDRPAPRRHEERELVTA. Basic and acidic residues predominate over residues 406 to 424; it reads RPVDRPAPRRHEERELVTA.

It belongs to the class I-like SAM-binding methyltransferase superfamily. C5-methyltransferase family.

It carries out the reaction a 2'-deoxycytidine in DNA + S-adenosyl-L-methionine = a 5-methyl-2'-deoxycytidine in DNA + S-adenosyl-L-homocysteine + H(+). In terms of biological role, a methylase that recognizes the double-stranded sequence 5'-CGATCG-3', methylates C-? on both strands and protects the DNA from cleavage by the XorII endonuclease. The protein is Type II methyltransferase M.XorII (xorIIM) of Xanthomonas oryzae pv. oryzae (strain KACC10331 / KXO85).